Here is a 177-residue protein sequence, read N- to C-terminus: Large ribosomal subunit protein uL6 (177 aa).

The protein belongs to the universal ribosomal protein uL6 family. As to quaternary structure, part of the 50S ribosomal subunit.

In terms of biological role, this protein binds to the 23S rRNA, and is important in its secondary structure. It is located near the subunit interface in the base of the L7/L12 stalk, and near the tRNA binding site of the peptidyltransferase center. This Methanothermobacter thermautotrophicus (strain ATCC 29096 / DSM 1053 / JCM 10044 / NBRC 100330 / Delta H) (Methanobacterium thermoautotrophicum) protein is Large ribosomal subunit protein uL6.